We begin with the raw amino-acid sequence, 714 residues long: Mitochondrial potassium channel ATP-binding subunit (714 aa).

The N-terminal 25 residues, 1-25 (MLVHLFRVGIRGGPVPRWSLQSLRF), are a transit peptide targeting the mitochondrion. Transmembrane regions (helical) follow at residues 127–147 (LLAL…NVQI), 178–198 (IQLL…LVLL), 278–298 (LMLA…GSGL), and 365–385 (NIAF…LVAG). An ABC transmembrane type-1 domain is found at 132 to 419 (LAIVLALGAA…LSVLFGQVVR (288 aa)). Residues 454 to 691 (ITFQNVSFSY…GGLYAELIRR (238 aa)) form the ABC transporter domain. 489 to 496 (GQSGGGKT) contributes to the ATP binding site.

It belongs to the ABC transporter superfamily. ABCB family. Multidrug resistance exporter (TC 3.A.1.201) subfamily. As to quaternary structure, the mitochondrial potassium channel (mitoK(ATP)) is composed of 4 subunits of CCDC51/MITOK and 4 subunits of ABCB8/MITOSUR. Physically interacts with PAAT. Interacts with Neuropilin-1 (NRP1) in mitochondria. As to expression, strong expression is found in the heart, brain and testis. In the testis, expressed both in the somatic Sertoli cells and peritubular cells and in the germline (spermatogonia and pachytene spermatocytes). Also expressed in the lung, liver, intestine and kidney.

The protein resides in the mitochondrion inner membrane. Channel activity inhibited by ATP via ABCB8/MITOSUR subunit. ATP-binding subunit of the mitochondrial ATP-gated potassium channel (mitoK(ATP)). v. An increase in ATP intracellular levels closes the channel, inhibiting K(+) transport, whereas a decrease in ATP levels enhances K(+) uptake in the mitochondrial matrix. Plays a role in mitochondrial iron transport. Required for maintenance of normal cardiac function, possibly by influencing mitochondrial iron export and regulating the maturation of cytosolic iron sulfur cluster-containing enzymes. This is Mitochondrial potassium channel ATP-binding subunit from Rattus norvegicus (Rat).